A 760-amino-acid polypeptide reads, in one-letter code: E4 SUMO-protein ligase PIAL2 (760 aa).

Positions 143–301 are interacting domain (IND), required for interaction with MOM1 and PIAL1; it reads IKSPGSTFSQ…GVIEASPDSD (159 aa). An SP-RING-type zinc finger spans residues 298–379; the sequence is PDSDIIEGPS…MAKILKDVEH (82 aa). The Zn(2+) site is built by Cys-329, His-331, Cys-352, and Cys-355. A compositionally biased stretch (basic and acidic residues) spans 440–450; that stretch reads GDNKVEDRKPC. 4 disordered regions span residues 440–471, 492–522, 631–657, and 699–760; these read GDNKVEDRKPCMSDAQGQSNNNNTNKHPSNDD, LGNTAPQPHQASNTGTGQQYSNLSQIPMSID, GVRGLTSSHASTSRQHPSGPTVQSVSR, and SQQS…GPTS. Composition is skewed to polar residues over residues 492 to 518, 631 to 653, and 699 to 729; these read LGNTAPQPHQASNTGTGQQYSNLSQIP, GVRGLTSSHASTSRQHPSGPTVQ, and SQQSQTSTRLNSSQPVQTPSVQTSQAQSPFT.

The protein belongs to the PIAL protein ligase family. As to quaternary structure, homodimer. Interacts with MOM1 and PIAL1 to form a high molecular mass complex which mediates transcriptional silencing at heterochromatin regions. In terms of tissue distribution, expressed in leaves, stems and flowers, and, at low levels, in siliques and old leaves.

Its subcellular location is the nucleus. It participates in protein modification; protein sumoylation. Its function is as follows. Together with MOM1 and PIAL1, regulates transcriptional gene silencing (TGS) independently of changes in DNA methylation. E4-type SUMO ligase that promotes SUMO chain formation in a SCE1-dependent manner and thus contributes to a pathway for proteolytic removal of sumoylation substrates. Involved in stress responses and sulfur metabolism. The sequence is that of E4 SUMO-protein ligase PIAL2 from Arabidopsis thaliana (Mouse-ear cress).